The sequence spans 197 residues: Dephospho-CoA kinase (197 aa).

Positions 4 to 197 (RLGLTGSIGM…RQIRAGNIHA (194 aa)) constitute a DPCK domain. 12-17 (GMGKST) provides a ligand contact to ATP.

This sequence belongs to the CoaE family.

The protein localises to the cytoplasm. It carries out the reaction 3'-dephospho-CoA + ATP = ADP + CoA + H(+). It participates in cofactor biosynthesis; coenzyme A biosynthesis; CoA from (R)-pantothenate: step 5/5. Catalyzes the phosphorylation of the 3'-hydroxyl group of dephosphocoenzyme A to form coenzyme A. This Ruegeria pomeroyi (strain ATCC 700808 / DSM 15171 / DSS-3) (Silicibacter pomeroyi) protein is Dephospho-CoA kinase.